The following is a 487-amino-acid chain: Probable glycine dehydrogenase (decarboxylating) subunit 2 (487 aa).

Lysine 273 is subject to N6-(pyridoxal phosphate)lysine.

It belongs to the GcvP family. C-terminal subunit subfamily. As to quaternary structure, the glycine cleavage system is composed of four proteins: P, T, L and H. In this organism, the P 'protein' is a heterodimer of two subunits. Requires pyridoxal 5'-phosphate as cofactor.

It catalyses the reaction N(6)-[(R)-lipoyl]-L-lysyl-[glycine-cleavage complex H protein] + glycine + H(+) = N(6)-[(R)-S(8)-aminomethyldihydrolipoyl]-L-lysyl-[glycine-cleavage complex H protein] + CO2. Functionally, the glycine cleavage system catalyzes the degradation of glycine. The P protein binds the alpha-amino group of glycine through its pyridoxal phosphate cofactor; CO(2) is released and the remaining methylamine moiety is then transferred to the lipoamide cofactor of the H protein. The protein is Probable glycine dehydrogenase (decarboxylating) subunit 2 of Lysinibacillus sphaericus (strain C3-41).